The following is a 176-amino-acid chain: Lipocalin-1 (176 aa).

The first 19 residues, 1–19 (MMRALLLAIGLGLVAALQA), serve as a signal peptide directing secretion. Cysteine 80 and cysteine 171 are joined by a disulfide.

It belongs to the calycin superfamily. Lipocalin family. Predominantly monomer. May form homodimer. Interacts with LMBR1L; this interaction mediates the endocytosis of LCN1.

The protein localises to the secreted. Could play a role in taste reception. Could be necessary for the concentration and delivery of sapid molecules in the gustatory system. Can bind various ligands, with chemical structures ranging from lipids and retinoids to the macrocyclic antibiotic rifampicin and even to microbial siderophores. Exhibits an extremely wide ligand pocket. In Sus scrofa (Pig), this protein is Lipocalin-1 (LCN1).